The primary structure comprises 751 residues: Cyanobacterial phytochrome B (751 aa).

Cys17 provides a ligand contact to a tetrapyrrole. Positions 22–511 (IHIPGLIQPH…RSAIIGIVLQ (490 aa)) are chromophore binding domain. One can recognise a GAF domain in the interval 152 to 320 (TTTEISQILA…MTSVEMSAKE (169 aa)). Residues 536–751 (IASHDLKEPL…STFYFTLQDV (216 aa)) form the Histidine kinase domain. The residue at position 539 (His539) is a Phosphohistidine; by autocatalysis.

In the N-terminal section; belongs to the phytochrome family. Contains one covalently linked tetrapyrrole chromophore.

The catalysed reaction is ATP + protein L-histidine = ADP + protein N-phospho-L-histidine.. Its function is as follows. Photoreceptor which exists in two forms that are reversibly interconvertible by light: the R form that absorbs maximally in the red region of the spectrum and the FR form that absorbs maximally in the far-red region. This is Cyanobacterial phytochrome B (bphB) from Nostoc sp. (strain PCC 7120 / SAG 25.82 / UTEX 2576).